The chain runs to 141 residues: Large ribosomal subunit protein uL16 (141 aa).

Belongs to the universal ribosomal protein uL16 family. Part of the 50S ribosomal subunit.

Functionally, binds 23S rRNA and is also seen to make contacts with the A and possibly P site tRNAs. This is Large ribosomal subunit protein uL16 from Geobacillus thermodenitrificans (strain NG80-2).